The primary structure comprises 208 residues: FMN-dependent NADH:quinone oxidoreductase (208 aa).

FMN-binding positions include 17–19 (SNS), 99–102 (MWNL), and 143–146 (SRGG).

It belongs to the azoreductase type 1 family. Homodimer. It depends on FMN as a cofactor.

It catalyses the reaction 2 a quinone + NADH + H(+) = 2 a 1,4-benzosemiquinone + NAD(+). The enzyme catalyses N,N-dimethyl-1,4-phenylenediamine + anthranilate + 2 NAD(+) = 2-(4-dimethylaminophenyl)diazenylbenzoate + 2 NADH + 2 H(+). Its function is as follows. Quinone reductase that provides resistance to thiol-specific stress caused by electrophilic quinones. In terms of biological role, also exhibits azoreductase activity. Catalyzes the reductive cleavage of the azo bond in aromatic azo compounds to the corresponding amines. This Staphylococcus aureus (strain COL) protein is FMN-dependent NADH:quinone oxidoreductase.